The primary structure comprises 486 residues: Cysteine--tRNA ligase (486 aa).

C30 lines the Zn(2+) pocket. The 'HIGH' region signature appears at 32–42 (PTVYDRAHLGN). Residues C221, H246, and E250 each coordinate Zn(2+). The 'KMSKS' region motif lies at 279 to 283 (KMSKS). K282 serves as a coordination point for ATP.

It belongs to the class-I aminoacyl-tRNA synthetase family. Monomer. It depends on Zn(2+) as a cofactor.

The protein localises to the cytoplasm. It catalyses the reaction tRNA(Cys) + L-cysteine + ATP = L-cysteinyl-tRNA(Cys) + AMP + diphosphate. This chain is Cysteine--tRNA ligase, found in Cereibacter sphaeroides (strain ATCC 17029 / ATH 2.4.9) (Rhodobacter sphaeroides).